The primary structure comprises 103 residues: Phosphoribosyl-ATP pyrophosphatase (103 aa).

A disordered region spans residues 79-103 (SVQAELERREGKLSTTRDRKEIDEL). Positions 83–103 (ELERREGKLSTTRDRKEIDEL) are enriched in basic and acidic residues.

The protein belongs to the PRA-PH family.

It is found in the cytoplasm. It carries out the reaction 1-(5-phospho-beta-D-ribosyl)-ATP + H2O = 1-(5-phospho-beta-D-ribosyl)-5'-AMP + diphosphate + H(+). Its pathway is amino-acid biosynthesis; L-histidine biosynthesis; L-histidine from 5-phospho-alpha-D-ribose 1-diphosphate: step 2/9. The polypeptide is Phosphoribosyl-ATP pyrophosphatase (Listeria welshimeri serovar 6b (strain ATCC 35897 / DSM 20650 / CCUG 15529 / CIP 8149 / NCTC 11857 / SLCC 5334 / V8)).